Reading from the N-terminus, the 867-residue chain is uncharacterized protein (867 aa).

The SPX domain maps to 1-294; sequence MKFSHSLQFN…GSSLRESYMK (294 aa). 2 disordered regions span residues 105 to 152 and 165 to 228; these read QGNN…GQTS and ESTA…NNNR. The segment covering 138–152 has biased composition (polar residues); sequence ITSSNREIYLNGQTS. Over residues 198 to 223 the composition is skewed to acidic residues; it reads GNDDEVEEEDDDDDDEDEDEDEDEDN. Transmembrane regions (helical) follow at residues 406-426, 434-454, 485-505, 537-557, 576-596, 616-636, 656-676, 683-703, 712-732, 755-775, 797-817, and 842-862; these read TIAT…FPVI, CLAL…PLFV, VIFS…FTIA, MFVA…VLCF, ILIV…PISS, FAVS…LLSF, FTGV…LWCL, VFGD…GTGL, FLWT…VVSS, VLLI…HIVA, LFVL…TSGF, and AGIP…TPIM.

This sequence belongs to the CitM (TC 2.A.11) transporter family.

It localises to the endoplasmic reticulum membrane. This is an uncharacterized protein from Schizosaccharomyces pombe (strain 972 / ATCC 24843) (Fission yeast).